The chain runs to 197 residues: Ribonuclease HII (197 aa).

The RNase H type-2 domain occupies 7–197 (LGIAGVDEVG…SFLRKLFATV (191 aa)). Asp13, Glu14, and Asp109 together coordinate a divalent metal cation.

The protein belongs to the RNase HII family. Mn(2+) serves as cofactor. It depends on Mg(2+) as a cofactor.

The protein localises to the cytoplasm. It catalyses the reaction Endonucleolytic cleavage to 5'-phosphomonoester.. In terms of biological role, endonuclease that specifically degrades the RNA of RNA-DNA hybrids. The chain is Ribonuclease HII from Synechococcus sp. (strain CC9311).